The following is a 503-amino-acid chain: Hemogen (503 aa).

2 stretches are compositionally biased toward basic residues: residues 1–10 (MDMGKGRPRL) and 61–79 (KKRK…RKRQ). Positions 1 to 129 (MDMGKGRPRL…PLVPSPTKAV (129 aa)) are disordered. Residues 7 to 87 (RPRLKLPQMP…RQGNVEQKAE (81 aa)) form a necessary for nuclear localization region. A phosphoserine mark is found at Ser-90, Ser-103, Ser-124, Ser-153, Ser-158, Ser-171, Ser-213, Ser-223, Ser-228, Ser-241, and Ser-269. Thr-286 is modified (phosphothreonine). Positions 381–503 (QKTIQESPEP…ENGIYSSALF (123 aa)) are disordered. Residues 385–396 (QESPEPEQYSPE) show a composition bias toward low complexity. 2 positions are modified to phosphoserine: Ser-387 and Ser-394. The segment covering 426–436 (CQDREEPKHSL) has biased composition (basic and acidic residues).

In terms of tissue distribution, expressed in hematopoietic precursor cells. Highly expressed in bone marrow, the red pulp of the spleen and round spermatids. Weakly expressed in peripheral blood cells.

Its subcellular location is the nucleus. Functionally, regulates the proliferation and differentiation of hematopoietic cells. Overexpression block the TPA-induced megakaryocytic differentiation in the K562 cell model. May also prevent cell apoptosis through the activation of the nuclear factor-kappa B (NF-kB). This is Hemogen (Hemgn) from Mus musculus (Mouse).